The following is a 77-amino-acid chain: Acyl carrier protein (77 aa).

In terms of domain architecture, Carrier spans 3-77 (QEIFEKVKKI…GKAVEHIESK (75 aa)). At serine 38 the chain carries O-(pantetheine 4'-phosphoryl)serine.

It belongs to the acyl carrier protein (ACP) family. 4'-phosphopantetheine is transferred from CoA to a specific serine of apo-ACP by AcpS. This modification is essential for activity because fatty acids are bound in thioester linkage to the sulfhydryl of the prosthetic group.

It is found in the cytoplasm. The protein operates within lipid metabolism; fatty acid biosynthesis. Its function is as follows. Carrier of the growing fatty acid chain in fatty acid biosynthesis. The protein is Acyl carrier protein of Synechocystis sp. (strain ATCC 27184 / PCC 6803 / Kazusa).